We begin with the raw amino-acid sequence, 49 residues long: Large ribosomal subunit protein bL33A (49 aa).

It belongs to the bacterial ribosomal protein bL33 family.

This is Large ribosomal subunit protein bL33A from Lactobacillus johnsonii (strain CNCM I-12250 / La1 / NCC 533).